A 369-amino-acid chain; its full sequence is Cyclin-I2 (369 aa).

Positions 1 to 116 (MASGAQLPPQ…SRKPRNLEGD (116 aa)) are disordered. Low complexity-rich tracts occupy residues 64 to 76 (AASL…AVPV) and 83 to 101 (APAG…EQAP).

Belongs to the cyclin family.

The polypeptide is Cyclin-I2 (CCNI2) (Homo sapiens (Human)).